We begin with the raw amino-acid sequence, 691 residues long: DNA ligase (691 aa).

NAD(+) contacts are provided by residues 41-45 (DAEFD), 91-92 (SL), and Glu121. Lys123 functions as the N6-AMP-lysine intermediate in the catalytic mechanism. NAD(+) is bound by residues Arg144, Glu184, Lys300, and Lys324. Residues Cys418, Cys421, Cys437, and Cys443 each coordinate Zn(2+). One can recognise a BRCT domain in the interval 607–691 (SVPRTLAGLT…LLADGPASRT (85 aa)).

This sequence belongs to the NAD-dependent DNA ligase family. LigA subfamily. Requires Mg(2+) as cofactor. The cofactor is Mn(2+).

The catalysed reaction is NAD(+) + (deoxyribonucleotide)n-3'-hydroxyl + 5'-phospho-(deoxyribonucleotide)m = (deoxyribonucleotide)n+m + AMP + beta-nicotinamide D-nucleotide.. Functionally, DNA ligase that catalyzes the formation of phosphodiester linkages between 5'-phosphoryl and 3'-hydroxyl groups in double-stranded DNA using NAD as a coenzyme and as the energy source for the reaction. It is essential for DNA replication and repair of damaged DNA. The polypeptide is DNA ligase (Mycobacterium tuberculosis (strain ATCC 25177 / H37Ra)).